A 122-amino-acid polypeptide reads, in one-letter code: MSKRRQERMSVEIMRVLSQIIQEEIKDPRIEFKNLSITRIDLSNDYSHARVNISILGDEIQREEAMKALQKAKGYIRSALAQQLKVRHAPELEFRLDRSIEHGIRISSLLEEIKEEAKGSNE.

It belongs to the RbfA family. Monomer. Binds 30S ribosomal subunits, but not 50S ribosomal subunits or 70S ribosomes.

It is found in the cytoplasm. Its function is as follows. One of several proteins that assist in the late maturation steps of the functional core of the 30S ribosomal subunit. Associates with free 30S ribosomal subunits (but not with 30S subunits that are part of 70S ribosomes or polysomes). Required for efficient processing of 16S rRNA. May interact with the 5'-terminal helix region of 16S rRNA. The chain is Ribosome-binding factor A from Syntrophomonas wolfei subsp. wolfei (strain DSM 2245B / Goettingen).